Here is a 312-residue protein sequence, read N- to C-terminus: Testis-expressed protein 13B (312 aa).

This sequence belongs to the TEX13 family. As to expression, testis specific.

The protein is Testis-expressed protein 13B (TEX13B) of Homo sapiens (Human).